We begin with the raw amino-acid sequence, 110 residues long: Integration host factor subunit alpha (110 aa).

Belongs to the bacterial histone-like protein family. As to quaternary structure, heterodimer of an alpha and a beta chain.

In terms of biological role, this protein is one of the two subunits of integration host factor, a specific DNA-binding protein that functions in genetic recombination as well as in transcriptional and translational control. The sequence is that of Integration host factor subunit alpha from Bdellovibrio bacteriovorus (strain ATCC 15356 / DSM 50701 / NCIMB 9529 / HD100).